The sequence spans 1121 residues: Putative ATP-dependent RNA helicase ECM32 (1121 aa).

Residues N157 to K187 are disordered. Residues R160 to K184 are compositionally biased toward basic residues. S227 is modified (phosphoserine). Residues A233 to K452 form a disordered region. A compositionally biased stretch (basic residues) spans N251–N263. The segment covering I278–P287 has biased composition (polar residues). Residues G307–Q316 show a composition bias toward basic and acidic residues. A compositionally biased stretch (low complexity) spans L323 to L336. The segment covering D342–K363 has biased composition (basic and acidic residues). Residues K376 to K413 are compositionally biased toward polar residues. The residue at position 392 (S392) is a Phosphoserine. Over residues L426–K452 the composition is skewed to basic and acidic residues. Phosphothreonine is present on T465. G670 to T677 provides a ligand contact to ATP.

This sequence belongs to the DNA2/NAM7 helicase family. As to quaternary structure, interacts with the peptidyl release factors SUP35 and weakly with SUP45.

It is found in the cytoplasm. The catalysed reaction is ATP + H2O = ADP + phosphate + H(+). Probable RNA helicase, which may be involved in modulation of the translation termination process. Probably unwinds double-stranded RNA. In vitro, unwinds covalently closed, circular DNA in the presence of a DNA topoisomerase TOP1 and replication factor-A protein RFA1. This Saccharomyces cerevisiae (strain ATCC 204508 / S288c) (Baker's yeast) protein is Putative ATP-dependent RNA helicase ECM32 (ECM32).